Here is a 261-residue protein sequence, read N- to C-terminus: Putative hydro-lyase Nther_1142 (261 aa).

The protein belongs to the D-glutamate cyclase family.

The sequence is that of Putative hydro-lyase Nther_1142 from Natranaerobius thermophilus (strain ATCC BAA-1301 / DSM 18059 / JW/NM-WN-LF).